We begin with the raw amino-acid sequence, 280 residues long: Putative aquaporin-10 (280 aa).

Residues 1-8 are Cytoplasmic-facing; the sequence is MEAVSSEY. A helical transmembrane segment spans residues 9 to 29; that stretch reads YFPLYSALGYFALVFGIGEIA. Residues 30–64 are Extracellular-facing; that stretch reads RIITAKYVSPRGNSQLFLYELIGTIQMCTCVYENG. Residues 65 to 85 traverse the membrane as a helical segment; sequence IIFKNYGFPAIFICVALLLTA. The Cytoplasmic portion of the chain corresponds to 86–114; the sequence is GNIFNRGAMTNCAPIFEQFVFGNLGSSKF. Residues 115–135 form a helical membrane-spanning segment; that stretch reads LTILSAQLIGATFASKFAYLI. The Extracellular segment spans residues 136 to 164; it reads WNITAPYSTAHLENASNLECILHYKQTAG. The chain crosses the membrane as a helical span at residues 165 to 185; the sequence is IVIGFEIVGAFVVRIVVAQLL. The Cytoplasmic portion of the chain corresponds to 186–193; that stretch reads ARPALIKL. Residues 194-214 traverse the membrane as a helical segment; sequence IPFAISAYLSLALYVVGVPGL. The Extracellular portion of the chain corresponds to 215–233; the sequence is NPIVATARLYGCRGIDNSS. A helical transmembrane segment spans residues 234-254; it reads FFILYWFCPVLGWLTGAYVVG. Residues 255–280 lie on the Cytoplasmic side of the membrane; that stretch reads QKSPSKKSAKDVKAEKKAKAAAKKSD. The interval 256-280 is disordered; it reads KSPSKKSAKDVKAEKKAKAAAKKSD. The segment covering 262-280 has biased composition (basic and acidic residues); sequence SAKDVKAEKKAKAAAKKSD.

Belongs to the MIP/aquaporin (TC 1.A.8) family.

The protein localises to the membrane. This is Putative aquaporin-10 (aqp-10) from Caenorhabditis elegans.